The following is a 139-amino-acid chain: Putative pre-16S rRNA nuclease (139 aa).

The protein belongs to the YqgF nuclease family.

It is found in the cytoplasm. Its function is as follows. Could be a nuclease involved in processing of the 5'-end of pre-16S rRNA. In Proteus mirabilis (strain HI4320), this protein is Putative pre-16S rRNA nuclease.